Reading from the N-terminus, the 1019-residue chain is Clotting factor C (1019 aa).

An N-terminal signal peptide occupies residues 1-25 (MVLASFLVSGLVLGILAQQMRPVQS). The EGF-like domain maps to 102-137 (YGTWCSGECQCKNGGICDQRTGACTCRDRYEGAHCE). Intrachain disulfides connect cysteine 110/cysteine 118, cysteine 112/cysteine 125, cysteine 127/cysteine 136, cysteine 142/cysteine 182, cysteine 168/cysteine 195, cysteine 199/cysteine 241, cysteine 227/cysteine 254, cysteine 260/cysteine 308, cysteine 294/cysteine 321, cysteine 331/cysteine 350, cysteine 354/cysteine 374, cysteine 464/cysteine 564, cysteine 538/cysteine 556, cysteine 576/cysteine 621, cysteine 607/cysteine 634, and cysteine 720/cysteine 748. Sushi domains are found at residues 140 to 197 (KGCP…KCIR), 198 to 256 (ECAK…QCKK), and 258 to 323 (VFCP…SCVK). The LCCL domain maps to 325–421 (ADREVDCDSK…EELKSLARSF (97 aa)). Positions 436-568 (CPDGWFEVEE…PSSFACMMDL (133 aa)) constitute a C-type lectin domain. N-linked (GlcNAc...) asparagine glycans are attached at residues asparagine 523 and asparagine 534. Sushi domains follow at residues 574–636 (AKCD…RCIK) and 689–750 (PRSS…SCIP). 3 N-linked (GlcNAc...) asparagine glycosylation sites follow: asparagine 624, asparagine 740, and asparagine 767. Residues 763–1019 (IWNGNSTEIG…VFLSWIRQFI (257 aa)) enclose the Peptidase S1 domain. A disulfide bond links cysteine 794 and cysteine 810. Catalysis depends on charge relay system residues histidine 809 and aspartate 865. An N-linked (GlcNAc...) asparagine glycan is attached at asparagine 912. Cysteine 932 and cysteine 951 are joined by a disulfide. Aspartate 960 lines the substrate pocket. Cysteine 962 and cysteine 996 form a disulfide bridge. Serine 966 serves as the catalytic Charge relay system.

It belongs to the peptidase S1 family. As to quaternary structure, heterodimer of a light chain and a heavy chain linked by a disulfide bond. Forms a covalent heterodimer with intracellular coagulation inhibitor 1/LICI-1. Forms a covalent heterodimer with intracellular coagulation inhibitor 2/LICI-2. In terms of processing, N-glycosylated. Post-translationally, lipopolysaccharide (LPS) activates clotting factor C by inducing the proteolytic cleavage of the clotting factor C light chain into clotting factor C chains A and B. Clotting factor C chains heavy, A and B remain associated via interchain disulfide bonds. As to expression, expressed in hemocytes (at protein level).

Its subcellular location is the secreted. The enzyme catalyses Selective cleavage of 103-Arg-|-Ser-104 and 124-Ile-|-Ile-125 bonds in Limulus clotting factor B to form activated factor B. Cleavage of -Pro-Arg-|-Xaa- bonds in synthetic substrates.. Its activity is regulated as follows. Activated by Gram-negative bacterial lipopolysaccharides. Inhibited by intracellular coagulation inhibitor 1/LICI-1 and to a lesser extent by intracellular coagulation inhibitors 2/LICI-2 and 3/LICI-3. Inhibited by the small molecule diisopropyl fluorophosphate (DFP). In terms of biological role, this enzyme is closely associated with an endotoxin-sensitive hemolymph coagulation system which may play important roles in both hemostasis and host defense mechanisms. Its active form catalyzes the activation of clotting factor B. This chain is Clotting factor C, found in Tachypleus tridentatus (Japanese horseshoe crab).